Consider the following 258-residue polypeptide: UPF0758 protein Bamb_2548 (258 aa).

The disordered stretch occupies residues 1-43 (MLSPCLAAPATECRDPADAPAAPARHTGPARPRKRRPRNWKPH). Basic residues predominate over residues 31-43 (RPRKRRPRNWKPH). One can recognise an MPN domain in the interval 136-258 (QIDSPGAVED…TFSFARAGWL (123 aa)). His-207, His-209, and Asp-220 together coordinate Zn(2+). Positions 207-220 (HNHPSGAVQPSAED) match the JAMM motif motif.

This sequence belongs to the UPF0758 family.

The polypeptide is UPF0758 protein Bamb_2548 (Burkholderia ambifaria (strain ATCC BAA-244 / DSM 16087 / CCUG 44356 / LMG 19182 / AMMD) (Burkholderia cepacia (strain AMMD))).